We begin with the raw amino-acid sequence, 149 residues long: Calmodulin-like protein 3 (149 aa).

4 consecutive EF-hand domains span residues 8-43, 44-79, 81-116, and 117-149; these read EQVTEFKEAFSLFDKDGDGCITTRELGTVMRSLGQN, PTEAELRDMMSEIDRDGNGTVDFPEFLGMMARKMKD, DNEEEIREAFRVFDKDGNGFVSAAELRHVMTRLGEK, and LSDEEVDEMIRAADTDGDGQVNYEEFVRVLVSK. Ca(2+) is bound by residues Asp-21, Asp-23, Asp-25, Cys-27, Glu-32, Asp-57, Asp-59, Asn-61, Thr-63, Glu-68, Asp-94, Asp-96, Asn-98, Glu-105, Asp-130, Asp-132, Asp-134, Gln-136, and Glu-141.

This sequence belongs to the calmodulin family. As to quaternary structure, interacts with MYO10, the interaction is calcium-dependent and essential for MYO10 function in filopodial extension. As to expression, expressed in normal mammary, prostate, cervical, and epidermal tissues. It is greatly reduced or undetectable in transformed cells.

In terms of biological role, may function as a specific light chain of unconventional myosin-10 (MYO10), also enhances MYO10 translation, possibly by acting as a chaperone for the emerging MYO10 heavy chain protein. May compete with calmodulin by binding, with different affinities, to cellular substrates. The protein is Calmodulin-like protein 3 (CALML3) of Homo sapiens (Human).